The following is a 360-amino-acid chain: Peptide chain release factor 1 (360 aa).

Gln-235 is modified (N5-methylglutamine). Over residues 285 to 308 (KRQEAEASERRNLLGSGDRSDRNR) the composition is skewed to basic and acidic residues. A disordered region spans residues 285 to 313 (KRQEAEASERRNLLGSGDRSDRNRTYNFP).

This sequence belongs to the prokaryotic/mitochondrial release factor family. Methylated by PrmC. Methylation increases the termination efficiency of RF1.

Its subcellular location is the cytoplasm. Its function is as follows. Peptide chain release factor 1 directs the termination of translation in response to the peptide chain termination codons UAG and UAA. The polypeptide is Peptide chain release factor 1 (Photorhabdus laumondii subsp. laumondii (strain DSM 15139 / CIP 105565 / TT01) (Photorhabdus luminescens subsp. laumondii)).